Consider the following 263-residue polypeptide: Phosphatidylglycerol--prolipoprotein diacylglyceryl transferase (263 aa).

A run of 4 helical transmembrane segments spans residues 6–26 (VIFS…VLGI), 50–70 (LLTA…VLIY), 85–105 (TWEG…AVII), and 112–132 (IPIF…LLLG). A 1,2-diacyl-sn-glycero-3-phospho-(1'-sn-glycerol) is bound at residue arginine 133. A run of 3 helical transmembrane segments spans residues 169-189 (LYEA…LFYL), 197-217 (GATT…VEFF), and 233-253 (MGQL…LGAL).

The protein belongs to the Lgt family.

It is found in the cell membrane. It catalyses the reaction L-cysteinyl-[prolipoprotein] + a 1,2-diacyl-sn-glycero-3-phospho-(1'-sn-glycerol) = an S-1,2-diacyl-sn-glyceryl-L-cysteinyl-[prolipoprotein] + sn-glycerol 1-phosphate + H(+). Its pathway is protein modification; lipoprotein biosynthesis (diacylglyceryl transfer). Functionally, catalyzes the transfer of the diacylglyceryl group from phosphatidylglycerol to the sulfhydryl group of the N-terminal cysteine of a prolipoprotein, the first step in the formation of mature lipoproteins. This Wolbachia pipientis subsp. Culex pipiens (strain wPip) protein is Phosphatidylglycerol--prolipoprotein diacylglyceryl transferase.